A 415-amino-acid chain; its full sequence is Dynein assembly factor with WD repeat domains 1 (415 aa).

8 WD repeats span residues 90–129 (AHILPLTNVAFNKSGSCFITGSYDRTCKIWDTASGEELHT), 132–172 (GHRN…CFYT), 175–214 (GHTAEIVCLAFNPQSTLVATGSMDTTAKLWDVESGEEVST), 217–256 (GHFAEIISLCFNTTGDRLVTGSFDHTAILWDVPSGRKVHV), 259–298 (GHRGEISCVQFNWDCSLIATASLDKSCKVWDAEGGQCLAT), 301–340 (GHNDEVLDVCFNYTGQLIATASADGTSRVFSTDTFQCLCQ), 343–384 (GHKG…QVLE), and 385–415 (GHSDEIFSCAFNYEGDTIITGSKDNTCRIWH).

This sequence belongs to the WD repeat WDR69 family. In terms of tissue distribution, expressed in organs bearing motile cilia, including the pronephros, otic vesicles and Kupffer's vesicle.

The protein localises to the cytoplasm. It localises to the cytoskeleton. It is found in the flagellum basal body. Its subcellular location is the flagellum axoneme. Its function is as follows. Required for axonemal dynein assembly and ciliary motility in ciliated organs, including Kupffer's vesicle, during embryogenesis. Facilitates the onset of robust cilia motility during development. This Danio rerio (Zebrafish) protein is Dynein assembly factor with WD repeat domains 1 (daw1).